A 209-amino-acid polypeptide reads, in one-letter code: Ribosomal RNA small subunit methyltransferase G (209 aa).

S-adenosyl-L-methionine contacts are provided by residues Gly71, Phe76, 122-123 (AE), and Arg135.

The protein belongs to the methyltransferase superfamily. RNA methyltransferase RsmG family.

Its subcellular location is the cytoplasm. Its function is as follows. Specifically methylates the N7 position of a guanine in 16S rRNA. This chain is Ribosomal RNA small subunit methyltransferase G, found in Phocaeicola vulgatus (strain ATCC 8482 / DSM 1447 / JCM 5826 / CCUG 4940 / NBRC 14291 / NCTC 11154) (Bacteroides vulgatus).